The primary structure comprises 199 residues: Recombination protein RecR (199 aa).

The C4-type zinc finger occupies cysteine 58 to cysteine 73. A Toprim domain is found at arginine 81–proline 176.

Belongs to the RecR family.

Functionally, may play a role in DNA repair. It seems to be involved in an RecBC-independent recombinational process of DNA repair. It may act with RecF and RecO. This is Recombination protein RecR from Acidobacterium capsulatum (strain ATCC 51196 / DSM 11244 / BCRC 80197 / JCM 7670 / NBRC 15755 / NCIMB 13165 / 161).